The following is a 661-amino-acid chain: FAST kinase domain-containing protein 3, mitochondrial (661 aa).

Residues 592–650 form the RAP domain; the sequence is VALCIDGPQRFCLDSKHLLGKEATKQRHLRLLGYQVVQLPYHELELLTSRLELVDYLQR.

This sequence belongs to the FAST kinase family. In terms of tissue distribution, expression detected in spleen, testis, colon, heart, smooth muscle, kidney, brain, lung, liver, brown and white adipose tissue with highest expression in testis and smooth muscle.

Its subcellular location is the mitochondrion. In terms of biological role, required for normal mitochondrial respiration. Increases steady-state levels and half-lives of a subset of mature mitochondrial mRNAs MT-ND2, MT-ND3, MT-CYTB, MT-CO2, and MT-ATP8/6. Promotes MT-CO1 mRNA translation and increases mitochondrial complex IV assembly and activity. This Mus musculus (Mouse) protein is FAST kinase domain-containing protein 3, mitochondrial (Fastkd3).